Here is a 148-residue protein sequence, read N- to C-terminus: Large ribosomal subunit protein uL15 (148 aa).

Positions 1–50 (MNLSNLKPAEGSTKTRKRIGRGPGSGLGGTSTRGHKGAKSRSGYSKKIGF) are disordered. Residues 21–31 (RGPGSGLGGTS) show a composition bias toward gly residues.

Belongs to the universal ribosomal protein uL15 family. As to quaternary structure, part of the 50S ribosomal subunit.

Functionally, binds to the 23S rRNA. This Bacteroides fragilis (strain ATCC 25285 / DSM 2151 / CCUG 4856 / JCM 11019 / LMG 10263 / NCTC 9343 / Onslow / VPI 2553 / EN-2) protein is Large ribosomal subunit protein uL15.